The following is a 275-amino-acid chain: MGFSSLLTTCRYLLYSGAGNSFILGESMPSLEDVLFLCQEEMVDGFLCVESSEIADAKLTVFNSDGSIASMCGNGLRCAMAHVAQCFGLEDVSIETERGVYQGKFFSMNRVLVDMTLPDWKKAERKLTHVLPGMPEQVFFIDTGVPHVVVFVSDLSKVPVQEWGSFLRYHEDFAPEGVNVDFVQRKKDDLLLVYTYERGCERETLSCGTGMLASALVAADIFSLGQDFSIAVCSRSRNLIKIFSEKGKVFLEGPVSLLNRSENFGWLEPKSRRFG.

Residues Asn-20 and Asn-63 each contribute to the substrate site. Catalysis depends on Cys-72, which acts as the Proton donor. Residues 73 to 74, Asn-179, and 197 to 198 contribute to the substrate site; these read GN and ER. Cys-207 serves as the catalytic Proton acceptor. 208–209 contributes to the substrate binding site; the sequence is GT.

This sequence belongs to the diaminopimelate epimerase family. Homodimer.

Its subcellular location is the cytoplasm. The catalysed reaction is (2S,6S)-2,6-diaminopimelate = meso-2,6-diaminopimelate. It participates in amino-acid biosynthesis; L-lysine biosynthesis via DAP pathway; DL-2,6-diaminopimelate from LL-2,6-diaminopimelate: step 1/1. Catalyzes the stereoinversion of LL-2,6-diaminopimelate (L,L-DAP) to meso-diaminopimelate (meso-DAP), a precursor of L-lysine and an essential component of the bacterial peptidoglycan. The polypeptide is Diaminopimelate epimerase (Chlamydia trachomatis serovar L2 (strain ATCC VR-902B / DSM 19102 / 434/Bu)).